Consider the following 139-residue polypeptide: Protein FAM237B (139 aa).

The N-terminal stretch at 1-24 (MCFATRRWFYLHLGCMMLINLVNA) is a signal peptide. M112 is subject to Methionine amide. Residues 113-139 (GRRQVMPPKYNFPQKITGGNLNVYLRE) constitute a propeptide, removed in the mature form.

In terms of processing, the active form requires C-terminal amidation and disulfide bond formation.

Its subcellular location is the secreted. Functionally, may be capable of activating GPR83 via the GNAQ signaling pathway. The chain is Protein FAM237B from Homo sapiens (Human).